The following is a 152-amino-acid chain: D-aminoacyl-tRNA deacylase (152 aa).

The short motif at 142-143 (GP) is the Gly-cisPro motif, important for rejection of L-amino acids element.

This sequence belongs to the DTD family. Homodimer.

It is found in the cytoplasm. The enzyme catalyses glycyl-tRNA(Ala) + H2O = tRNA(Ala) + glycine + H(+). The catalysed reaction is a D-aminoacyl-tRNA + H2O = a tRNA + a D-alpha-amino acid + H(+). In terms of biological role, an aminoacyl-tRNA editing enzyme that deacylates mischarged D-aminoacyl-tRNAs. Also deacylates mischarged glycyl-tRNA(Ala), protecting cells against glycine mischarging by AlaRS. Acts via tRNA-based rather than protein-based catalysis; rejects L-amino acids rather than detecting D-amino acids in the active site. By recycling D-aminoacyl-tRNA to D-amino acids and free tRNA molecules, this enzyme counteracts the toxicity associated with the formation of D-aminoacyl-tRNA entities in vivo and helps enforce protein L-homochirality. This chain is D-aminoacyl-tRNA deacylase, found in Burkholderia vietnamiensis (strain G4 / LMG 22486) (Burkholderia cepacia (strain R1808)).